Reading from the N-terminus, the 753-residue chain is 5-methyltetrahydropteroyltriglutamate--homocysteine methyltransferase (753 aa).

Residues 17–20 and lysine 117 contribute to the 5-methyltetrahydropteroyltri-L-glutamate site; that span reads RELK. L-homocysteine is bound by residues 431–433 and glutamate 484; that span reads IGS. Residues 431 to 433 and glutamate 484 each bind L-methionine; that span reads IGS. Residues 515–516 and tryptophan 561 contribute to the 5-methyltetrahydropteroyltri-L-glutamate site; that span reads RC. Aspartate 599 contributes to the L-homocysteine binding site. Aspartate 599 is a binding site for L-methionine. A 5-methyltetrahydropteroyltri-L-glutamate-binding site is contributed by glutamate 605. The Zn(2+) site is built by histidine 641, cysteine 643, and glutamate 665. Histidine 694 (proton donor) is an active-site residue. Cysteine 726 lines the Zn(2+) pocket.

Belongs to the vitamin-B12 independent methionine synthase family. It depends on Zn(2+) as a cofactor.

It carries out the reaction 5-methyltetrahydropteroyltri-L-glutamate + L-homocysteine = tetrahydropteroyltri-L-glutamate + L-methionine. It participates in amino-acid biosynthesis; L-methionine biosynthesis via de novo pathway; L-methionine from L-homocysteine (MetE route): step 1/1. Functionally, catalyzes the transfer of a methyl group from 5-methyltetrahydrofolate to homocysteine resulting in methionine formation. The protein is 5-methyltetrahydropteroyltriglutamate--homocysteine methyltransferase of Enterobacter sp. (strain 638).